The following is a 302-amino-acid chain: MRPVDKKPVDRKIERETRYLRRDPAPSRWSYRYQRLMLTPAFRAGVRLGTPVIIIALAVAVVFGRADSRDWIMGHYNAAIAAVTQRPEFMVGSFAITGASPDLALAIEGLVDIPFPISTFNLDLQDLRTNIAALSPVRNVNVQAGGGVLQIVIEERQPVAVWRHVDGLRLMDGEGIATGMILNRADRPELPLIAGDGAQAAIPEAMELFRIASPLGARVLALVRMGERRWDLVLDREQIVQLPAVDAVAALQRVIAQEEAQQLLSRDVAVVDMRNDARQTIRMTQRARDALRSMPGRSAGRG.

Residues 1–43 (MRPVDKKPVDRKIERETRYLRRDPAPSRWSYRYQRLMLTPAFR) are Cytoplasmic-facing. The helical transmembrane segment at 44 to 64 (AGVRLGTPVIIIALAVAVVFG) threads the bilayer. Topologically, residues 65 to 302 (RADSRDWIMG…SMPGRSAGRG (238 aa)) are periplasmic. Positions 89-156 (FMVGSFAITG…GVLQIVIEER (68 aa)) constitute a POTRA domain.

It belongs to the FtsQ/DivIB family. FtsQ subfamily.

It is found in the cell inner membrane. Its function is as follows. Essential cell division protein. This Ketogulonicigenium vulgare (strain Y25) protein is Cell division protein FtsQ.